The sequence spans 863 residues: Disintegrin and metalloproteinase domain-containing protein 15 (863 aa).

Positions 1–17 (MRLALLWALGLLGAGSP) are cleaved as a signal peptide. Positions 18–206 (LPSWPLPNIG…LGQRHIRRRR (189 aa)) are excised as a propeptide. Residues 22–45 (PLPNIGGTEEQQAESEKAPREPLE) form a disordered region. A compositionally biased stretch (basic and acidic residues) spans 35–44 (ESEKAPREPL). The Cysteine switch motif lies at 177-184 (HTCALSWR). A Zn(2+)-binding site is contributed by C179. Topologically, residues 207–696 (DVVTETKTVE…QLKATSSLTT (490 aa)) are extracellular. Positions 213 to 414 (KTVELVIVAD…GMGSCLFERL (202 aa)) constitute a Peptidase M12B domain. An N-linked (GlcNAc...) asparagine glycan is attached at N237. 4 disulfides stabilise this stretch: C323/C409, C365/C393, C367/C376, and C480/C500. H348 is a Zn(2+) binding site. Residue E349 is part of the active site. Zn(2+) is bound by residues H352 and H358. N-linked (GlcNAc...) asparagine glycosylation is found at N389 and N392. Residues 421-508 (AAFCGNMFVE…QCPPDVSLGD (88 aa)) enclose the Disintegrin domain. Positions 484 to 486 (RGD) match the Cell attachment site motif. 2 N-linked (GlcNAc...) asparagine glycosylation sites follow: N606 and N611. 3 disulfides stabilise this stretch: C657/C667, C661/C673, and C675/C684. Positions 657–685 (CRSKCHGHGVCDSNRHCYCEEGWAPPDCT) constitute an EGF-like domain. Residues 697–717 (GLLLSLLVLLVLVMLGASYWY) traverse the membrane as a helical segment. A phosphotyrosine; by HCK and LCK mark is found at Y715 and Y735. The Cytoplasmic portion of the chain corresponds to 718–863 (RARLHQRLCQ…PPPTVSSLYL (146 aa)). Residues 736 to 863 (RAAQSGPSER…PPPTVSSLYL (128 aa)) form a disordered region. Residues 767-778 (PAPPSRPLPPDP) are compositionally biased toward pro residues. Positions 779–789 (VSKRLQAELAD) are enriched in basic and acidic residues. Composition is skewed to pro residues over residues 791-800 (PNPPTRPLPA) and 813-824 (AKPPPPRKPLPA). 2 short sequence motifs (SH3-binding) span residues 815 to 821 (PPPPRKP) and 850 to 856 (RPAPPPP).

Interacts with ITAGV-ITGB3 (vitronectin receptor). Interacts with SH3GL2 and SNX9; this interaction occurs preferentially with ADAM15 precursor, rather than the processed form, suggesting it occurs in a secretory pathway compartment prior to the medial Golgi. Interacts with ITAG9-ITGB1. Interacts specifically with Src family protein-tyrosine kinases (PTKs). Interacts with SH3PXD2A. Interacts with ITAGV-ITGB1. Interacts with GRB2, HCK, ITSN1, ITSN2, LYN, MAPK1, MAPK3, NCF1, NCK1, nephrocystin, PTK6, SNX33, LCK and SRC. Zn(2+) is required as a cofactor. The precursor is cleaved by a furin endopeptidase. Post-translationally, phosphorylation increases association with PTKs. In terms of tissue distribution, expressed in colon and small intestine. Expressed in airway smooth muscle and glomerular mesangial cells (at protein level). Ubiquitously expressed. Overexpressed in atherosclerotic lesions. Constitutively expressed in cultured endothelium and smooth muscle. Expressed in chondrocytes. Expressed in airway smooth muscle and glomerular mesangial cells.

The protein localises to the endomembrane system. It localises to the cell junction. It is found in the adherens junction. The protein resides in the cell projection. Its subcellular location is the cilium. The protein localises to the flagellum. It localises to the cytoplasmic vesicle. It is found in the secretory vesicle. The protein resides in the acrosome. With respect to regulation, inhibited by hydroxamate-type metalloproteinase inhibitors such as marimastat. Inhibited by metalloproteinase inhibitor 2 (TIMP-2) and TIMP-3 at nanomolar concentrations. Not significantly inhibited by TIMP-1 at concentrations of up to 100 nM. Not activated by PMA or ionomycin. In terms of biological role, active metalloproteinase with gelatinolytic and collagenolytic activity. Plays a role in the wound healing process. Mediates both heterotypic intraepithelial cell/T-cell interactions and homotypic T-cell aggregation. Inhibits beta-1 integrin-mediated cell adhesion and migration of airway smooth muscle cells. Suppresses cell motility on or towards fibronectin possibly by driving alpha-v/beta-1 integrin (ITAGV-ITGB1) cell surface expression via ERK1/2 inactivation. Cleaves E-cadherin in response to growth factor deprivation. Plays a role in glomerular cell migration. Plays a role in pathological neovascularization. May play a role in cartilage remodeling. May be proteolytically processed, during sperm epididymal maturation and the acrosome reaction. May play a role in sperm-egg binding through its disintegrin domain. The polypeptide is Disintegrin and metalloproteinase domain-containing protein 15 (ADAM15) (Homo sapiens (Human)).